We begin with the raw amino-acid sequence, 226 residues long: UPF0758 protein SPJ_1027 (226 aa).

One can recognise an MPN domain in the interval 103 to 225; sequence SILSSQKLAK…YFSYREKTDL (123 aa). Zn(2+) is bound by residues His-174, His-176, and Asp-187. Residues 174–187 carry the JAMM motif motif; it reads HNHPSGAVAPSQND.

Belongs to the UPF0758 family.

This Streptococcus pneumoniae (strain JJA) protein is UPF0758 protein SPJ_1027.